Consider the following 556-residue polypeptide: MQVTQEKRPGSRVGLKIVVEADRVKRSYEKTLRQLEQNIQIPGFRKGKAPRNLVVRQVGRERILASAVDDLINEAIQQAFKEAQLTPISRFELDDEVGQLLAQFNPEADFSFSGYVEVYPEARVGQYKGLTVTATRVDVKPEQIDQLIDRWRDQRATLLPVEDRPAQLGDVVVIDFAARDAEGNPLDEMTTQDFQLELKEDNFIPGFVAGIVGMQLDETKEIAATFPDDYFRKELAGKTVTFIVCLREIKAKELPELDDAFVQEISSFQTVAELREHLQKRLEQDALRQSEENLETAILNAILETTEVDLPETLIEQETTQLLAQSLQALRQEGIKPGELRKFLSELPPETLNQLKERHRPEAIDRLRRTLALSAIVRQEQIAVGSTELDVEVEEVMAAYAQQGQKLDRERVRQAVYESLLTNKVMAWLKSQTTVNWVDSEGNPTQAPTSLAGSEEKVEVPEAEFEADEPEAEVSGIPEAVESSSETATGAETDGEAAAAEAEPATEKAVEASPAETVSASAAEATLPVEEKAAETATEIPAAEKPKPSKKDKKGK.

The PPIase FKBP-type domain occupies 169 to 255 (GDVVVIDFAA…LREIKAKELP (87 aa)). The span at 438-452 (VDSEGNPTQAPTSLA) shows a compositional bias: polar residues. Positions 438-556 (VDSEGNPTQA…KPSKKDKKGK (119 aa)) are disordered. Over residues 461–472 (PEAEFEADEPEA) the composition is skewed to acidic residues. Composition is skewed to low complexity over residues 486–503 (ETATGAETDGEAAAAEAE) and 511–526 (EASPAETVSASAAEAT).

The protein belongs to the FKBP-type PPIase family. Tig subfamily.

The protein resides in the cytoplasm. The catalysed reaction is [protein]-peptidylproline (omega=180) = [protein]-peptidylproline (omega=0). Its function is as follows. Involved in protein export. Acts as a chaperone by maintaining the newly synthesized protein in an open conformation. Functions as a peptidyl-prolyl cis-trans isomerase. This Synechococcus sp. (strain JA-2-3B'a(2-13)) (Cyanobacteria bacterium Yellowstone B-Prime) protein is Trigger factor.